Consider the following 53-residue polypeptide: Conotoxin Cal6.23 (53 aa).

Positions 1 to 22 (MKLTAVLMVAVLVLTACQLITA) are cleaved as a signal peptide. Cystine bridges form between cysteine 25–cysteine 40, cysteine 32–cysteine 47, and cysteine 39–cysteine 51.

Belongs to the conotoxin O1 superfamily. Expressed by the venom duct.

It localises to the secreted. Its function is as follows. Probable neurotoxin. The chain is Conotoxin Cal6.23 from Californiconus californicus (California cone).